Reading from the N-terminus, the 396-residue chain is Small ribosomal subunit protein uS9m (396 aa).

The segment at 374–396 (PRVRERKKPGQEGARRKFTWKKR) is disordered.

Belongs to the universal ribosomal protein uS9 family. Component of the mitochondrial ribosome small subunit (28S) which comprises a 12S rRNA and about 30 distinct proteins.

The protein resides in the mitochondrion. This Bos taurus (Bovine) protein is Small ribosomal subunit protein uS9m (MRPS9).